A 1714-amino-acid polypeptide reads, in one-letter code: Collagen alpha-1(XXIV) chain (1714 aa).

An N-terminal signal peptide occupies residues 1-35; the sequence is MHLRAHRTRRGKVSPTAKTKSLLHFIVLCVAGVVV. The region spanning 141 to 217 is the Laminin G-like domain; it reads KLVVHIRGKQ…MNNNSIHFEG (77 aa). Asparagine 155, asparagine 321, and asparagine 376 each carry an N-linked (GlcNAc...) asparagine glycan. 17 Collagen-like domains span residues 487 to 542, 552 to 611, 660 to 719, 741 to 797, 798 to 857, 858 to 887, 888 to 947, 948 to 1007, 1011 to 1052, 1053 to 1112, 1116 to 1170, 1172 to 1196, 1201 to 1249, 1252 to 1306, 1309 to 1353, 1354 to 1413, and 1420 to 1479; these read LRGP…PGFS, GDQG…EGNP, GPAG…KGEQ, GPPG…RGPP, GPPG…TGPV, GLPG…QGEK, GVMG…KGEK, GDQG…PGEM, GPPG…PGAP, GEEG…PGQR, GKKG…GIPG, RGHQ…PGED, GPPG…GEPG, GEQG…GNPG, GPPG…QGPK, GEQG…EGDA, and GPKG…PGPR. Positions 487–1481 are disordered; the sequence is LRGPKGDTGP…PPGAPGPRKQ (995 aa). The segment covering 496–505 has biased composition (pro residues); sequence PPGPPGPAGI. 2 stretches are compositionally biased toward low complexity: residues 574-587 and 685-701; these read HPGL…QGIP and SVGP…PGPM. Pro residues predominate over residues 893–902; that stretch reads PGPPGVPGPI. Low complexity predominate over residues 985–1019; sequence DRGLPGEPGLRGLQGDVGPPGEMGMEGPPGTEGES. Composition is skewed to gly residues over residues 1035–1044 and 1065–1074; these read GSVGGTGEPG and GVPGGRGLPG. Low complexity-rich tracts occupy residues 1132 to 1145 and 1174 to 1186; these read SRGP…SGPK and HQGQ…LPGP. Positions 1256-1266 are enriched in basic and acidic residues; it reads LKGERGSEGNK. Residues 1271 to 1293 show a composition bias toward low complexity; the sequence is APGPSGKPGIPGLQGLLGPKGIQ. Residues 1318-1327 show a composition bias toward gly residues; the sequence is GIRGGPGRTG. The span at 1466 to 1476 shows a compositional bias: pro residues; that stretch reads QPGPPGPPGAP. Residues 1515-1714 form the Fibrillar collagen NC1 domain; sequence EEIFKTLNYL…YIDSSSVCFL (200 aa).

The protein belongs to the fibrillar collagen family.

It is found in the secreted. The protein resides in the extracellular space. Its subcellular location is the extracellular matrix. May participate in regulating type I collagen fibrillogenesis at specific anatomical locations during fetal development. The protein is Collagen alpha-1(XXIV) chain (COL24A1) of Homo sapiens (Human).